A 751-amino-acid chain; its full sequence is Photosystem I P700 chlorophyll a apoprotein A1 (751 aa).

The next 8 membrane-spanning stretches (helical) occupy residues 73–96, 159–182, 198–222, 294–312, 349–372, 388–414, 436–458, and 533–551; these read VFSA…FHGA, LYTT…FHYH, LNHH…HVSL, TVHH…GHQY, WHAQ…HHMY, LSLF…IFMV, AMIS…LYIH, and FMVH…LILL. [4Fe-4S] cluster-binding residues include Cys575 and Cys584. 2 helical membrane passes run 591–612 and 665–687; these read HVFL…HFSW and LSAY…MFLF. His676 is a binding site for chlorophyll a'. Residues Met684 and Tyr692 each coordinate chlorophyll a. Trp693 is a binding site for phylloquinone. Residues 725–745 form a helical membrane-spanning segment; it reads AVGVAHYLLGGIATTWSFFLA.

The protein belongs to the PsaA/PsaB family. As to quaternary structure, the PsaA/B heterodimer binds the P700 chlorophyll special pair and subsequent electron acceptors. PSI consists of a core antenna complex that captures photons, and an electron transfer chain that converts photonic excitation into a charge separation. The eukaryotic PSI reaction center is composed of at least 11 subunits. P700 is a chlorophyll a/chlorophyll a' dimer, A0 is one or more chlorophyll a, A1 is one or both phylloquinones and FX is a shared 4Fe-4S iron-sulfur center. serves as cofactor.

The protein resides in the plastid. Its subcellular location is the chloroplast thylakoid membrane. It catalyses the reaction reduced [plastocyanin] + hnu + oxidized [2Fe-2S]-[ferredoxin] = oxidized [plastocyanin] + reduced [2Fe-2S]-[ferredoxin]. Its function is as follows. PsaA and PsaB bind P700, the primary electron donor of photosystem I (PSI), as well as the electron acceptors A0, A1 and FX. PSI is a plastocyanin/cytochrome c6-ferredoxin oxidoreductase, converting photonic excitation into a charge separation, which transfers an electron from the donor P700 chlorophyll pair to the spectroscopically characterized acceptors A0, A1, FX, FA and FB in turn. Oxidized P700 is reduced on the lumenal side of the thylakoid membrane by plastocyanin or cytochrome c6. This Chlorella vulgaris (Green alga) protein is Photosystem I P700 chlorophyll a apoprotein A1.